The following is a 568-amino-acid chain: Estrogen receptor beta-1 (568 aa).

The interval 12–169 (SEYAEGDSSL…SLRGKADMHY (158 aa)) is modulating. 2 NR C4-type zinc fingers span residues 170 to 190 (CAVCSDYASGYHYGVWSCEGC) and 206 to 230 (CPATNQCTIDKNRRKSCQACRLRKC). The segment at residues 170 to 235 (CAVCSDYASG…RLRKCYEVGM (66 aa)) is a DNA-binding region (nuclear receptor). One can recognise an NR LBD domain in the interval 292 to 528 (SPEELIARIM…DLLLEMLDAH (237 aa)).

It belongs to the nuclear hormone receptor family. NR3 subfamily. In terms of assembly, binds DNA as a homodimer. Can form a heterodimer with ER-alpha.

Its subcellular location is the nucleus. Binds estrogens with an affinity similar to that of ER-alpha, and activates expression of reporter genes containing estrogen response elements (ERE) in an estrogen-dependent manner. The chain is Estrogen receptor beta-1 (esr2a) from Carassius auratus (Goldfish).